Consider the following 209-residue polypeptide: Guanylyl cyclase-activating protein 3 (209 aa).

Residue G2 is the site of N-myristoyl glycine attachment. N3 carries the post-translational modification Deamidated asparagine. 4 consecutive EF-hand domains span residues 15–50 (PTQETHVWYRTFMMEYPSGLQTLHEFKTLLGLQGLN), 52–87 (KANKHIDQVYNTFDTNKDGFVDFLEFIAAVNLIMQE), 88–123 (KMEQKLKWYFKLYDADGNGSIDKNELLDMFMAVQAL), and 130–165 (SPEEFINLVFHKIDINNDGELTLEEFINGMAKDQDL). The Ca(2+) site is built by D65, N67, D69, E76, D101, D103, N105, S107, E112, D143, N145, D147, E149, and E154. The interval 187 to 209 (QPDMETDSSKSPDKAGLGKVKMK) is disordered.

As to expression, retina.

In terms of biological role, stimulates guanylyl cyclase 1 (GC1) and GC2 when free calcium ions concentration is low and inhibits guanylyl cyclases when free calcium ions concentration is elevated. This Ca(2+)-sensitive regulation of guanylyl cyclase (GC) is a key event in recovery of the dark state of rod photoreceptors following light exposure. This is Guanylyl cyclase-activating protein 3 (GUCA1C) from Homo sapiens (Human).